Consider the following 291-residue polypeptide: Lipoyl synthase, mitochondrial (291 aa).

[4Fe-4S] cluster-binding residues include Cys-45, Cys-50, Cys-56, Cys-71, Cys-75, Cys-78, and Ser-283. A Radical SAM core domain is found at 57 to 272 (WGEGTATFMI…EKIGKELGFR (216 aa)).

The protein belongs to the radical SAM superfamily. Lipoyl synthase family. [4Fe-4S] cluster is required as a cofactor.

The protein resides in the mitochondrion. The enzyme catalyses [[Fe-S] cluster scaffold protein carrying a second [4Fe-4S](2+) cluster] + N(6)-octanoyl-L-lysyl-[protein] + 2 oxidized [2Fe-2S]-[ferredoxin] + 2 S-adenosyl-L-methionine + 4 H(+) = [[Fe-S] cluster scaffold protein] + N(6)-[(R)-dihydrolipoyl]-L-lysyl-[protein] + 4 Fe(3+) + 2 hydrogen sulfide + 2 5'-deoxyadenosine + 2 L-methionine + 2 reduced [2Fe-2S]-[ferredoxin]. It participates in protein modification; protein lipoylation via endogenous pathway; protein N(6)-(lipoyl)lysine from octanoyl-[acyl-carrier-protein]: step 2/2. Its function is as follows. Catalyzes the radical-mediated insertion of two sulfur atoms into the C-6 and C-8 positions of the octanoyl moiety bound to the lipoyl domains of lipoate-dependent enzymes, thereby converting the octanoylated domains into lipoylated derivatives. The chain is Lipoyl synthase, mitochondrial from Nematostella vectensis (Starlet sea anemone).